The sequence spans 71 residues: Small ribosomal subunit protein bS21 (71 aa).

This sequence belongs to the bacterial ribosomal protein bS21 family.

The chain is Small ribosomal subunit protein bS21 from Wigglesworthia glossinidia brevipalpis.